The following is a 2077-amino-acid chain: Large tegument protein deneddylase (2077 aa).

The segment at 1–231 (MKIITSSTNQ…PDIAIALDKF (231 aa)) is deubiquitination activity. The region spanning 3–221 (IITSSTNQND…ELLILKTYKD (219 aa)) is the Peptidase C76 domain. Catalysis depends on residues Cys-23, Asp-156, and His-158. Ser-287 is a region of interest (interaction with inner tegument protein). Positions 1982-2004 (PPNNTESTRPGKQTSETLTNKNL) are disordered.

Belongs to the herpesviridae large tegument protein family. As to quaternary structure, interacts with host CUL1 and CUL4A; these interactions inhibit the E3 ligase activity of cullins. Interacts with inner tegument protein. Interacts with capsid vertex specific component CVC2. Interacts with the major capsid protein/MCP.

It localises to the virion tegument. It is found in the host cytoplasm. Its subcellular location is the host nucleus. The enzyme catalyses Thiol-dependent hydrolysis of ester, thioester, amide, peptide and isopeptide bonds formed by the C-terminal Gly of ubiquitin (a 76-residue protein attached to proteins as an intracellular targeting signal).. Its function is as follows. Large tegument protein that plays multiple roles in the viral cycle. During viral entry, remains associated with the capsid while most of the tegument is detached and participates in the capsid transport toward the host nucleus. Plays a role in the routing of the capsid at the nuclear pore complex and subsequent uncoating. Within the host nucleus, acts as a deneddylase and promotes the degradation of nuclear CRLs (cullin-RING ubiquitin ligases) and thereby stabilizes nuclear CRL substrates, while cytoplasmic CRLs remain unaffected. These modifications prevent host cell cycle S-phase progression and create a favorable environment allowing efficient viral genome replication. Participates later in the secondary envelopment of capsids. Indeed, plays a linker role for the association of the outer viral tegument to the capsids together with the inner tegument protein. This is Large tegument protein deneddylase (U31) from Homo sapiens (Human).